The sequence spans 327 residues: Probable cell division protein WhiA (327 aa).

The H-T-H motif DNA-binding region spans 275–308 (SLEELGRLADPPMTKDAVAGRIRRLLSMADRKAK).

It belongs to the WhiA family.

In terms of biological role, involved in cell division and chromosome segregation. The chain is Probable cell division protein WhiA from Mycobacterium marinum (strain ATCC BAA-535 / M).